The sequence spans 469 residues: Glutamate--tRNA ligase 2 (469 aa).

A 'HIGH' region motif is present at residues 8–18; sequence PSPTGFLHVGG. A 'KMSKS' region motif is present at residues 250–254; it reads KLSKR. Lysine 253 lines the ATP pocket.

Belongs to the class-I aminoacyl-tRNA synthetase family. Glutamate--tRNA ligase type 1 subfamily. In terms of assembly, monomer.

It is found in the cytoplasm. The enzyme catalyses tRNA(Glu) + L-glutamate + ATP = L-glutamyl-tRNA(Glu) + AMP + diphosphate. Functionally, catalyzes the attachment of glutamate to tRNA(Glu) in a two-step reaction: glutamate is first activated by ATP to form Glu-AMP and then transferred to the acceptor end of tRNA(Glu). This Thermotoga petrophila (strain ATCC BAA-488 / DSM 13995 / JCM 10881 / RKU-1) protein is Glutamate--tRNA ligase 2.